The chain runs to 132 residues: WSKIDIDVCGPLALQRCLIVYPWTQRYFGSFGDLSTVAAIMGNPKVAQHGVVALTGLRTALDHMDEIKSTYAALSVLHSEKLHVDPDNFRLLCECLTIVIAGKMGKKLSPDMQAAWQKYLCAVVSALGRQYH.

One can recognise a Globin domain in the interval 1 to 132; sequence WSKIDIDVCG…VVSALGRQYH (132 aa). 2 residues coordinate heme b: H49 and H78.

Belongs to the globin family. Hb 1 is a heterotetramer of two alpha-1 and two beta-1 chains. Hb 2 is a heterotetramer of two alpha-2 and two beta-1 chains. As to expression, red blood cells.

In terms of biological role, involved in oxygen transport from gills to the various peripheral tissues. This is Hemoglobin subunit beta-1 (hbb1) from Arctogadus glacialis (Arctic cod).